The following is a 537-amino-acid chain: MDKHLSPGFASYHAQRILATPNVVTITEVALGIITLYLLGSYIVRRNSLPPGPRGLPIVGNVRDLPTERPWLFWAKHKDIYGPISSITVMGQSFIIVNELQIAIDLLDKKSAIYSDRPRLEFAGEMIGWNRQMILSQYGERFRTMRKFVKEFIGTKAAVVQYRPLQEIETRYFLARVLATPEHLADHLRLTAGAIFLRMSHGYAIDTEKPDALVNLVETAAKEFYIATSPGAWLVDQFPALQKLPNWFPGTHFKKVAAEFFEHNMEQADRPHEFVKRRMNAGTALPSFTSRMLERGLDEKDDEVVRWAANSLYGGGTDTVVASLSAFFLTMVLYPEVQKKAQKEIDTVIGTDRLPTLDDRSRLPYIEAVLKEVLRWHPIGPMGIPHRVTEDDVYNGYLIPKGAIVLPNLWMFAHDPSQYHNADEFKPERYLETDGNVPELDPHALAFGFGRRACPGQELADTNMFLTIAMSLAVFNISKAVDEKGREIEPVNEFSSGTVSHPKPYKCKVTPRSASAEELIRLVGDDHMNRPTDANDL.

A helical membrane pass occupies residues 23–43 (VVTITEVALGIITLYLLGSYI). Cysteine 454 lines the heme pocket.

It belongs to the cytochrome P450 family. The cofactor is heme.

The protein localises to the membrane. The catalysed reaction is (2E)-geranylhydroquinone + reduced [NADPH--hemoprotein reductase] + O2 = wigandol + oxidized [NADPH--hemoprotein reductase] + 2 H2O + H(+). It functions in the pathway secondary metabolite biosynthesis; terpenoid biosynthesis. Cytochrome P450 monooxygenase; part of the gene cluster that mediates the biosynthesis of clavilactone A, a meroterpenoid that features a unique benzo-fused ten-membered carbocyclic ring unit with an alpha,beta-epoxy-gamma-lactone moiety, forming an intriguing 10/5/3 tricyclic nested skeleton. ClaR, ClaS and ClaT are sufficient to produce clavilactone A. ClaR acts as a macrocyclase to catalyze the oxidative cyclization of the isopentenyl to the nonterpenoid moieties to form the benzo-fused macrocycle, leading to wigantol. The biosynthesis begins with the prenyltransferase claS that transfers geranyl pyrophosphate (GPP) to hydroquinone to produces geranylhydroquinone. The cytochrome P450 monooxygenase claR then catalyzes the diradical coupling reaction between the intramolecular hydroquinone and allyl moieties to form the benzo-fused ten-membered carbocyclic ring unit of wigantol. Finally the cytochrome P450 monooxygenase claT exquisitely and stereoselectively assembles the alpha,beta-epoxy-gamma-lactone moiety, producing clavilactone A via arnebinol A. The sequence is that of Cytochrome P450 monooxygenase claR from Ampulloclitocybe clavipes (Club foot).